A 147-amino-acid chain; its full sequence is uncharacterized protein (147 aa).

The protein to M.jannaschii MJ0215.

This is an uncharacterized protein from Methanocaldococcus jannaschii (strain ATCC 43067 / DSM 2661 / JAL-1 / JCM 10045 / NBRC 100440) (Methanococcus jannaschii).